The following is a 471-amino-acid chain: MSAVKSVSSFRLASLLRRENDPSAAMKLFRNPDPESTNPKRPFRYSLLCYDIIITKLGGSKMFDELDQVLLHLKTDTRIVPTEIIFCNVINFFGRGKLPSRALHMFDEMPQYRCQRTVKSLNSLLSALLKCGELEKMKERLSSIDEFGKPDACTYNILIHGCSQSGCFDDALKLFDEMVKKKVKPTGVTFGTLIHGLCKDSRVKEALKMKHDMLKVYGVRPTVHIYASLIKALCQIGELSFAFKLKDEAYEGKIKVDAAIYSTLISSLIKAGRSNEVSMILEEMSEKGCKPDTVTYNVLINGFCVENDSESANRVLDEMVEKGLKPDVISYNMILGVFFRIKKWEEATYLFEDMPRRGCSPDTLSYRIVFDGLCEGLQFEEAAVILDEMLFKGYKPRRDRLEGFLQKLCESGKLEILSKVISSLHRGIAGDADVWSVMIPTMCKEPVISDSIDLLLNTVKEDGPLSAMPQC.

10 PPR repeats span residues 46–81 (SLLC…RIVP), 82–116 (TEII…RCQR), 117–147 (TVKS…IDEF), 151–185 (DACT…KVKP), 186–221 (TGVT…GVRP), 222–256 (TVHI…KIKV), 257–291 (DAAI…GCKP), 292–326 (DTVT…GLKP), 327–361 (DVIS…GCSP), and 362–396 (DTLS…GYKP).

This sequence belongs to the PPR family. P subfamily.

Its function is as follows. Involved during embryo development. The polypeptide is Putative pentatricopeptide repeat-containing protein At1g53330 (Arabidopsis thaliana (Mouse-ear cress)).